The chain runs to 247 residues: ATP synthase subunit a, chloroplastic (247 aa).

5 consecutive transmembrane segments (helical) span residues 38 to 58 (QVLITSWVVIAILLGSATLAV), 95 to 115 (VPFIGTMFLFIFVSNWSGALL), 134 to 154 (INTTVALALLTSVAYFYAGLT), 199 to 219 (LVVVVLVSLVPSVVPIPVMFL), and 220 to 240 (GLFTSGIQALIFATLAAAYIG).

Belongs to the ATPase A chain family. In terms of assembly, F-type ATPases have 2 components, CF(1) - the catalytic core - and CF(0) - the membrane proton channel. CF(1) has five subunits: alpha(3), beta(3), gamma(1), delta(1), epsilon(1). CF(0) has four main subunits: a, b, b' and c.

It localises to the plastid. The protein resides in the chloroplast thylakoid membrane. In terms of biological role, key component of the proton channel; it plays a direct role in the translocation of protons across the membrane. The chain is ATP synthase subunit a, chloroplastic from Guizotia abyssinica (Niger).